The following is a 251-amino-acid chain: Probable transcriptional regulatory protein cauri_1421 (251 aa).

Residues Met-1 to Arg-21 are disordered.

The protein belongs to the TACO1 family.

Its subcellular location is the cytoplasm. The protein is Probable transcriptional regulatory protein cauri_1421 of Corynebacterium aurimucosum (strain ATCC 700975 / DSM 44827 / CIP 107346 / CN-1) (Corynebacterium nigricans).